Consider the following 227-residue polypeptide: Cytochrome c oxidase subunit 2 (227 aa).

Topologically, residues 1–14 (MAHPFQTGLQDATS) are mitochondrial intermembrane. The helical transmembrane segment at 15-45 (PIMEELLHFHDHTLMIVFLISSLVLYIISIM) threads the bilayer. Residues 46 to 59 (LTTKLTHTNTMDAQ) lie on the Mitochondrial matrix side of the membrane. Residues 60 to 87 (EVETVWTILPAIILIMIALPSLRILYMM) traverse the membrane as a helical segment. Residues 88-227 (DEINNPSLTV…YFEKWSASML (140 aa)) lie on the Mitochondrial intermembrane side of the membrane. Cu cation-binding residues include histidine 161, cysteine 196, glutamate 198, cysteine 200, histidine 204, and methionine 207. Mg(2+) is bound at residue glutamate 198. Residue tyrosine 218 is modified to Phosphotyrosine.

The protein belongs to the cytochrome c oxidase subunit 2 family. As to quaternary structure, component of the cytochrome c oxidase (complex IV, CIV), a multisubunit enzyme composed of 14 subunits. The complex is composed of a catalytic core of 3 subunits MT-CO1, MT-CO2 and MT-CO3, encoded in the mitochondrial DNA, and 11 supernumerary subunits COX4I, COX5A, COX5B, COX6A, COX6B, COX6C, COX7A, COX7B, COX7C, COX8 and NDUFA4, which are encoded in the nuclear genome. The complex exists as a monomer or a dimer and forms supercomplexes (SCs) in the inner mitochondrial membrane with NADH-ubiquinone oxidoreductase (complex I, CI) and ubiquinol-cytochrome c oxidoreductase (cytochrome b-c1 complex, complex III, CIII), resulting in different assemblies (supercomplex SCI(1)III(2)IV(1) and megacomplex MCI(2)III(2)IV(2)). Found in a complex with TMEM177, COA6, COX18, COX20, SCO1 and SCO2. Interacts with TMEM177 in a COX20-dependent manner. Interacts with COX20. Interacts with COX16. Requires Cu cation as cofactor.

It is found in the mitochondrion inner membrane. The enzyme catalyses 4 Fe(II)-[cytochrome c] + O2 + 8 H(+)(in) = 4 Fe(III)-[cytochrome c] + 2 H2O + 4 H(+)(out). Component of the cytochrome c oxidase, the last enzyme in the mitochondrial electron transport chain which drives oxidative phosphorylation. The respiratory chain contains 3 multisubunit complexes succinate dehydrogenase (complex II, CII), ubiquinol-cytochrome c oxidoreductase (cytochrome b-c1 complex, complex III, CIII) and cytochrome c oxidase (complex IV, CIV), that cooperate to transfer electrons derived from NADH and succinate to molecular oxygen, creating an electrochemical gradient over the inner membrane that drives transmembrane transport and the ATP synthase. Cytochrome c oxidase is the component of the respiratory chain that catalyzes the reduction of oxygen to water. Electrons originating from reduced cytochrome c in the intermembrane space (IMS) are transferred via the dinuclear copper A center (CU(A)) of subunit 2 and heme A of subunit 1 to the active site in subunit 1, a binuclear center (BNC) formed by heme A3 and copper B (CU(B)). The BNC reduces molecular oxygen to 2 water molecules using 4 electrons from cytochrome c in the IMS and 4 protons from the mitochondrial matrix. The sequence is that of Cytochrome c oxidase subunit 2 (MT-CO2) from Ailuropoda melanoleuca (Giant panda).